A 412-amino-acid polypeptide reads, in one-letter code: Acyl-[acyl-carrier-protein] hydrolase FATB2, chloroplastic (412 aa).

2 stretches are compositionally biased toward low complexity: residues 1–13 (TAAS…VPSA) and 56–66 (GSSVGLKSGGL). Residues 1–46 (TAASSAFFPVPSADTSSRPGKLGNGPSSFSPLKPKSIPNGGLQVKA) constitute a chloroplast transit peptide. The segment at 1-78 (TAASSAFFPV…HDDAPSAPPP (78 aa)) is disordered. Active-site residues include Asn-311, His-313, and Cys-348.

This sequence belongs to the acyl-ACP thioesterase family.

Its subcellular location is the plastid. It localises to the chloroplast. The catalysed reaction is tetradecanoyl-[ACP] + H2O = tetradecanoate + holo-[ACP] + H(+). The enzyme catalyses hexadecanoyl-[ACP] + H2O = hexadecanoate + holo-[ACP] + H(+). Plays an essential role in chain termination during de novo fatty acid synthesis. Possesses thioesterase activity for medium chain acyl-ACPs. Substrate preference is 14:0 &gt; 16:0 &gt; 16:1. The polypeptide is Acyl-[acyl-carrier-protein] hydrolase FATB2, chloroplastic (Cuphea viscosissima (Blue waxweed)).